A 474-amino-acid polypeptide reads, in one-letter code: MTVKTRFAPSPTGYLHVGGARTALYSWLYAKNQGGEFVLRIEDTDLERNSQEAVDAILEGMEWLGLEWDEGPYYQTQRFDRYNEMVDKLLAEDKAYKCYASKELLDEIRAEQEANKEMPRYDANHPKIKAANEAAKDGDPCVIRFRNPKEGSVVFEDQIRGRIEIRNDQMDDLIIRRTDGSPTYNFCVVVDDWDMGITHVVRGEDHINNTPRQINIYEALGAPVPTFAHCAMILGDDGAKLSKRHGAVSVMQYRDMGYLPAALNNYLVRLGWSHGDQEIFSQEEMINLFSLNAVSKSASAFNTDKLQWLNNHYIKNSDPAYVAEHLQWHLDQQKLDVTNGPAITDVIKLVGERCHTLVELAEQIRYFYEDFSEFEAGAAKKHLRGVAKEPLEVALAKVEAITEWTTENLHQMIADVCAELEIGMGKIGMPLRVAVTGGGQSPSVDAVMALIGKERCVARIKMALEFIAEREANA.

Residues 9–19 carry the 'HIGH' region motif; that stretch reads PSPTGYLHVGG. The 'KMSKS' region motif lies at 240-244; the sequence is KLSKR. K243 provides a ligand contact to ATP.

Belongs to the class-I aminoacyl-tRNA synthetase family. Glutamate--tRNA ligase type 1 subfamily. Monomer.

It localises to the cytoplasm. It catalyses the reaction tRNA(Glu) + L-glutamate + ATP = L-glutamyl-tRNA(Glu) + AMP + diphosphate. Catalyzes the attachment of glutamate to tRNA(Glu) in a two-step reaction: glutamate is first activated by ATP to form Glu-AMP and then transferred to the acceptor end of tRNA(Glu). This is Glutamate--tRNA ligase from Vibrio parahaemolyticus serotype O3:K6 (strain RIMD 2210633).